Here is a 305-residue protein sequence, read N- to C-terminus: tRNA dimethylallyltransferase (305 aa).

Residue 9-16 (GPTAVGKT) participates in ATP binding. 11–16 (TAVGKT) is a binding site for substrate. Residues 34-37 (DSRQ) form an interaction with substrate tRNA region.

The protein belongs to the IPP transferase family. As to quaternary structure, monomer. Mg(2+) is required as a cofactor.

It carries out the reaction adenosine(37) in tRNA + dimethylallyl diphosphate = N(6)-dimethylallyladenosine(37) in tRNA + diphosphate. Catalyzes the transfer of a dimethylallyl group onto the adenine at position 37 in tRNAs that read codons beginning with uridine, leading to the formation of N6-(dimethylallyl)adenosine (i(6)A). In Roseiflexus sp. (strain RS-1), this protein is tRNA dimethylallyltransferase.